A 76-amino-acid polypeptide reads, in one-letter code: Acyl carrier protein (76 aa).

The Carrier domain maps to 1–76 (MSIEERVKKI…SAIDYVQNNQ (76 aa)). Serine 36 bears the O-(pantetheine 4'-phosphoryl)serine mark.

Belongs to the acyl carrier protein (ACP) family. In terms of processing, 4'-phosphopantetheine is transferred from CoA to a specific serine of apo-ACP by AcpS. This modification is essential for activity because fatty acids are bound in thioester linkage to the sulfhydryl of the prosthetic group.

Its subcellular location is the cytoplasm. It participates in lipid metabolism; fatty acid biosynthesis. Carrier of the growing fatty acid chain in fatty acid biosynthesis. The polypeptide is Acyl carrier protein (Mannheimia succiniciproducens (strain KCTC 0769BP / MBEL55E)).